Reading from the N-terminus, the 210-residue chain is MAEGSRLYFAVTVLMCAFVSINGVGLNDLLERASQLSDKLHSLSTSLTNDLDSHFPPVGRVMMPRPSMCHTSSLQIPNDKDQALKVPEDELLSLARSLLLAWSDPLALLSSEASSLAHPERNTINSKTKELQDNINSLGAGLERVVHKMGSSSDNLSSLPFYSNSLGQDKTSRLVNFHFLLSCFRRDSHKIDSFLKVLRCRAAKKRPEMC.

Residues 1 to 23 (MAEGSRLYFAVTVLMCAFVSING) form the signal peptide. Intrachain disulfides connect Cys-69/Cys-183 and Cys-200/Cys-210.

It belongs to the somatotropin/prolactin family. Pituitary gland.

The protein localises to the secreted. The chain is Prolactin (prl) from Hypophthalmichthys nobilis (Bighead carp).